Consider the following 240-residue polypeptide: Biosynthetic peptidoglycan transglycosylase (240 aa).

The helical transmembrane segment at 9–31 (FLNVVKWFAIASVLLVLLFRVVP) threads the bilayer.

It belongs to the glycosyltransferase 51 family.

Its subcellular location is the cell inner membrane. The enzyme catalyses [GlcNAc-(1-&gt;4)-Mur2Ac(oyl-L-Ala-gamma-D-Glu-L-Lys-D-Ala-D-Ala)](n)-di-trans,octa-cis-undecaprenyl diphosphate + beta-D-GlcNAc-(1-&gt;4)-Mur2Ac(oyl-L-Ala-gamma-D-Glu-L-Lys-D-Ala-D-Ala)-di-trans,octa-cis-undecaprenyl diphosphate = [GlcNAc-(1-&gt;4)-Mur2Ac(oyl-L-Ala-gamma-D-Glu-L-Lys-D-Ala-D-Ala)](n+1)-di-trans,octa-cis-undecaprenyl diphosphate + di-trans,octa-cis-undecaprenyl diphosphate + H(+). It functions in the pathway cell wall biogenesis; peptidoglycan biosynthesis. Peptidoglycan polymerase that catalyzes glycan chain elongation from lipid-linked precursors. The protein is Biosynthetic peptidoglycan transglycosylase of Pseudomonas fluorescens (strain SBW25).